The following is a 208-amino-acid chain: Large ribosomal subunit protein uL3 (208 aa).

Positions 123–147 (RHGQSRGPMAHGSRYHRRPGSMGPV) are disordered.

This sequence belongs to the universal ribosomal protein uL3 family. Part of the 50S ribosomal subunit. Forms a cluster with proteins L14 and L19.

In terms of biological role, one of the primary rRNA binding proteins, it binds directly near the 3'-end of the 23S rRNA, where it nucleates assembly of the 50S subunit. This is Large ribosomal subunit protein uL3 from Streptococcus sanguinis (strain SK36).